We begin with the raw amino-acid sequence, 184 residues long: Oligoribonuclease (184 aa).

Residues 9-172 form the Exonuclease domain; that stretch reads LIWIDLEMTG…DDIRESIEEL (164 aa). Tyr-130 is a catalytic residue.

Belongs to the oligoribonuclease family.

It localises to the cytoplasm. In terms of biological role, 3'-to-5' exoribonuclease specific for small oligoribonucleotides. The chain is Oligoribonuclease from Actinobacillus pleuropneumoniae serotype 5b (strain L20).